A 220-amino-acid chain; its full sequence is Pyrrolidone-carboxylate peptidase (220 aa).

Active-site residues include glutamate 80, cysteine 143, and histidine 167.

The protein belongs to the peptidase C15 family. In terms of assembly, homotetramer.

The protein localises to the cytoplasm. The enzyme catalyses Release of an N-terminal pyroglutamyl group from a polypeptide, the second amino acid generally not being Pro.. Removes 5-oxoproline from various penultimate amino acid residues except L-proline. The chain is Pyrrolidone-carboxylate peptidase (pcp) from Thermococcus litoralis (strain ATCC 51850 / DSM 5473 / JCM 8560 / NS-C).